The chain runs to 217 residues: Histone H1-gamma, late (217 aa).

Disordered stretches follow at residues 1-21 (MSAAKPKVAKKARVAPAHPPS) and 80-217 (GKGA…PAKK). Residues 17 to 91 (AHPPSSQMVV…GASGSFKLGK (75 aa)) form the H15 domain. Residues 104-113 (IAAKKAKLAA) are compositionally biased toward basic residues. The span at 114–123 (KKKEQREKKA) shows a compositional bias: basic and acidic residues. The span at 124–217 (LKTKARKEKV…AKKAAKPAKK (94 aa)) shows a compositional bias: basic residues.

This sequence belongs to the histone H1/H5 family.

The protein localises to the nucleus. Its subcellular location is the chromosome. Functionally, histones H1 are necessary for the condensation of nucleosome chains into higher-order structures. In Strongylocentrotus purpuratus (Purple sea urchin), this protein is Histone H1-gamma, late.